We begin with the raw amino-acid sequence, 243 residues long: Orotidine 5'-phosphate decarboxylase (243 aa).

Residues Asp-19, Lys-41, 69 to 78 (DLKFFDIPAT), Thr-124, Arg-185, Gln-194, Gly-214, and Arg-215 contribute to the substrate site. Lys-71 (proton donor) is an active-site residue.

The protein belongs to the OMP decarboxylase family. Type 1 subfamily. As to quaternary structure, homodimer.

The enzyme catalyses orotidine 5'-phosphate + H(+) = UMP + CO2. It functions in the pathway pyrimidine metabolism; UMP biosynthesis via de novo pathway; UMP from orotate: step 2/2. In terms of biological role, catalyzes the decarboxylation of orotidine 5'-monophosphate (OMP) to uridine 5'-monophosphate (UMP). The polypeptide is Orotidine 5'-phosphate decarboxylase (Xanthomonas euvesicatoria pv. vesicatoria (strain 85-10) (Xanthomonas campestris pv. vesicatoria)).